The chain runs to 149 residues: Endothelin-1 (149 aa).

A propeptide spanning residues A1–S33 is cleaved from the precursor. The interval V6–A26 is disordered. 2 disulfide bridges follow: C36/C50 and C38/C46. The propeptide occupies V57–K149. Positions C93–C107 are endothelin-like.

Belongs to the endothelin/sarafotoxin family.

It is found in the secreted. In terms of biological role, endothelins are endothelium-derived vasoconstrictor peptides. Probable ligand for G-protein coupled receptors EDNRA and EDNRB which activates PTK2B, BCAR1, BCAR3 and, GTPases RAP1 and RHOA cascade in glomerular mesangial cells. Also binds the DEAR/FBXW7-AS1 receptor. Promotes mesenteric arterial wall remodeling via activation of ROCK signaling and subsequent colocalization of NFATC3 with F-actin filaments. NFATC3 then translocates to the nucleus where it subsequently promotes the transcription of the smooth muscle hypertrophy and differentiation marker ACTA2. The polypeptide is Endothelin-1 (EDN1) (Cavia porcellus (Guinea pig)).